A 353-amino-acid polypeptide reads, in one-letter code: Melanin-concentrating hormone receptor 1 (353 aa).

The Extracellular portion of the chain corresponds to 1-45 (MDLQASLLSTGPNASNISDGQDNFTLAGPPPRTRSVSYINIIMPS). Residues N13, N16, and N23 are each glycosylated (N-linked (GlcNAc...) asparagine). Residues 46–66 (VFGTICLLGIVGNSTVIFAVV) traverse the membrane as a helical segment. The Cytoplasmic portion of the chain corresponds to 67-79 (KKSKLHWCSNVPD). Residues 80-100 (IFIINLSVVDLLFLLGMPFMI) traverse the membrane as a helical segment. The Extracellular segment spans residues 101–116 (HQLMGNGVWHFGETMC). A disulfide bond links C116 and C194. The chain crosses the membrane as a helical span at residues 117 to 139 (TLITAMDANSQFTSTYILTAMAI). Topologically, residues 140–161 (DRYLATVHPISSTKFRKPSMAT) are cytoplasmic. The helical transmembrane segment at 162–182 (LVICLLWALSFISITPVWLYA) threads the bilayer. Topologically, residues 183–204 (RLIPFPGGAVGCGIRLPNPDTD) are extracellular. The chain crosses the membrane as a helical span at residues 205-225 (LYWFTLYQFFLAFALPFVVIT). The Cytoplasmic segment spans residues 226–256 (AAYVKILQRMTSSVAPASQRSIRLRTKRVTR). A helical membrane pass occupies residues 257-277 (TAIAICLVFFVCWAPYYVLQL). Over 278–294 (TQLSISRPTLTFVYLYN) the chain is Extracellular. Residues 295 to 315 (AAISLGYANSCLNPFVYIVLC) traverse the membrane as a helical segment. Over 316–353 (ETFRKRLVLSVKPAAQGQLRTVSNAQTADEERTESKGT) the chain is Cytoplasmic.

It belongs to the G-protein coupled receptor 1 family. In terms of assembly, interacts with NCDN. Expressed predominantly in the brain. Expression in brain is negatively regulated by leptin. Also found in the epithelium of the tongue and kidney.

The protein localises to the cell membrane. Receptor for melanin-concentrating hormone, coupled to both G proteins that inhibit adenylyl cyclase and G proteins that activate phosphoinositide hydrolysis. This chain is Melanin-concentrating hormone receptor 1, found in Mus musculus (Mouse).